We begin with the raw amino-acid sequence, 351 residues long: tRNA-splicing endonuclease (351 aa).

Catalysis depends on residues Y287, H298, and K329.

It belongs to the tRNA-intron endonuclease family. Archaeal long subfamily. Homodimer.

It carries out the reaction pretRNA = a 3'-half-tRNA molecule with a 5'-OH end + a 5'-half-tRNA molecule with a 2',3'-cyclic phosphate end + an intron with a 2',3'-cyclic phosphate and a 5'-hydroxyl terminus.. Functionally, endonuclease that removes tRNA introns. Cleaves pre-tRNA at the 5'- and 3'-splice sites to release the intron. The products are an intron and two tRNA half-molecules bearing 2',3' cyclic phosphate and 5'-OH termini. Recognizes a pseudosymmetric substrate in which 2 bulged loops of 3 bases are separated by a stem of 4 bp. The polypeptide is tRNA-splicing endonuclease (Methanococcoides burtonii (strain DSM 6242 / NBRC 107633 / OCM 468 / ACE-M)).